A 542-amino-acid chain; its full sequence is Phosphoglucomutase (542 aa).

Substrate is bound by residues Thr17, Arg21, 112-113 (SH), and Lys125. The Phosphoserine intermediate role is filled by Ser112. Ser112 is a Mg(2+) binding site. Asp276, Asp278, and Asp280 together coordinate Mg(2+). Residues 280–281 (DR), Thr343, 362–364 (EES), Lys375, and Arg495 contribute to the substrate site.

Belongs to the phosphohexose mutase family. It depends on Mg(2+) as a cofactor.

The catalysed reaction is alpha-D-glucose 1-phosphate = alpha-D-glucose 6-phosphate. Functionally, this enzyme participates in both the breakdown and synthesis of glucose. Required for the synthesis of capsular polysaccharide and normal lipopolysaccharide. This is Phosphoglucomutase (pgm) from Rhizobium radiobacter (Agrobacterium tumefaciens).